Here is a 581-residue protein sequence, read N- to C-terminus: Aspartate--tRNA ligase (581 aa).

Glu-170 is a binding site for L-aspartate. Positions 194-197 are aspartate; sequence QLFK. Arg-216 lines the L-aspartate pocket. ATP contacts are provided by residues 216–218 and Gln-225; that span reads RDE. His-440 contributes to the L-aspartate binding site. Residue Glu-469 participates in ATP binding. Arg-476 is a binding site for L-aspartate. An ATP-binding site is contributed by 521–524; that stretch reads GFDR.

The protein belongs to the class-II aminoacyl-tRNA synthetase family. Type 1 subfamily. As to quaternary structure, homodimer.

It is found in the cytoplasm. It catalyses the reaction tRNA(Asp) + L-aspartate + ATP = L-aspartyl-tRNA(Asp) + AMP + diphosphate. Its function is as follows. Catalyzes the attachment of L-aspartate to tRNA(Asp) in a two-step reaction: L-aspartate is first activated by ATP to form Asp-AMP and then transferred to the acceptor end of tRNA(Asp). This Thermosipho africanus (strain TCF52B) protein is Aspartate--tRNA ligase.